We begin with the raw amino-acid sequence, 89 residues long: Large ribosomal subunit protein bL31B (89 aa).

Belongs to the bacterial ribosomal protein bL31 family. Type B subfamily. Part of the 50S ribosomal subunit.

This is Large ribosomal subunit protein bL31B from Enterococcus faecalis (strain ATCC 700802 / V583).